A 443-amino-acid polypeptide reads, in one-letter code: D-serine dehydratase (443 aa).

Lysine 118 carries the N6-(pyridoxal phosphate)lysine modification.

It belongs to the serine/threonine dehydratase family. DsdA subfamily. Monomer. Requires pyridoxal 5'-phosphate as cofactor.

The enzyme catalyses D-serine = pyruvate + NH4(+). The polypeptide is D-serine dehydratase (Escherichia coli O17:K52:H18 (strain UMN026 / ExPEC)).